The primary structure comprises 35 residues: Photosystem II reaction center protein T (35 aa).

The helical transmembrane segment at 3–23 (ALVYTFLLVSTLGILFFAIFF) threads the bilayer.

It belongs to the PsbT family. PSII is composed of 1 copy each of membrane proteins PsbA, PsbB, PsbC, PsbD, PsbE, PsbF, PsbH, PsbI, PsbJ, PsbK, PsbL, PsbM, PsbT, PsbY, PsbZ, Psb30/Ycf12, at least 3 peripheral proteins of the oxygen-evolving complex and a large number of cofactors. It forms dimeric complexes.

The protein localises to the plastid. Its subcellular location is the chloroplast thylakoid membrane. Its function is as follows. Found at the monomer-monomer interface of the photosystem II (PS II) dimer, plays a role in assembly and dimerization of PSII. PSII is a light-driven water plastoquinone oxidoreductase, using light energy to abstract electrons from H(2)O, generating a proton gradient subsequently used for ATP formation. The protein is Photosystem II reaction center protein T of Gnetum gnemon (Spanish joint-fir).